The primary structure comprises 116 residues: MFQLDFDFKDLSRWDNFYRVYKAIHELSMICKPVVKETHKGYHIYCDIELSPEKIMNLRYYFGDDIWRIMYDEQRMIFAPHLFDVLYQEKEVFTITPHGIHVDENYHEYDVTDKVL.

This is an uncharacterized protein from Acidianus filamentous virus 2 (isolate Italy/Pozzuoli) (AFV-2).